We begin with the raw amino-acid sequence, 356 residues long: uncharacterized protein (356 aa).

Transmembrane regions (helical) follow at residues 2-22, 35-55, 76-96, 99-119, 124-144, and 152-172; these read IESIIYNVAVMVAGIYLFHRL, GYVTVLMTIVALLLAAYPIPF, NMGYTLVSAVIVALVEVFAFG, LLYGVVLIVIGIIVSMVGPFL, IVALVILNLISVIILLILSIF, and EIAFLVPISFVLTIASAITFV. In terms of domain architecture, GGDEF spans 218–353; it reads ESLALLLIDI…GRNQVMFNPI (136 aa).

It is found in the cell membrane. This is an uncharacterized protein from Staphylococcus haemolyticus (strain JCSC1435).